A 92-amino-acid polypeptide reads, in one-letter code: Acylphosphatase (92 aa).

An Acylphosphatase-like domain is found at 4-92 (AVQLDVFGRV…SACHKFSVVG (89 aa)). Active-site residues include R19 and N37.

This sequence belongs to the acylphosphatase family.

The catalysed reaction is an acyl phosphate + H2O = a carboxylate + phosphate + H(+). The protein is Acylphosphatase (acyP) of Latilactobacillus sakei subsp. sakei (strain 23K) (Lactobacillus sakei subsp. sakei).